The following is a 374-amino-acid chain: Chaperone protein DnaJ (374 aa).

One can recognise a J domain in the interval 5 to 70; the sequence is CYYEILNVSK…SKRSRYDQFG (66 aa). The CR-type zinc finger occupies 130–207; that stretch reads GVEKEITIPR…CYGNGKVKKQ (78 aa). Zn(2+) is bound by residues cysteine 143, cysteine 146, cysteine 159, cysteine 162, cysteine 181, cysteine 184, cysteine 195, and cysteine 198. 4 CXXCXGXG motif repeats span residues 143–150, 159–166, 181–188, and 195–202; these read CDSCDGTG, CHACHGQG, CPVCNGTG, and CDACYGNG.

Belongs to the DnaJ family. As to quaternary structure, homodimer. It depends on Zn(2+) as a cofactor.

Its subcellular location is the cytoplasm. Its function is as follows. Participates actively in the response to hyperosmotic and heat shock by preventing the aggregation of stress-denatured proteins and by disaggregating proteins, also in an autonomous, DnaK-independent fashion. Unfolded proteins bind initially to DnaJ; upon interaction with the DnaJ-bound protein, DnaK hydrolyzes its bound ATP, resulting in the formation of a stable complex. GrpE releases ADP from DnaK; ATP binding to DnaK triggers the release of the substrate protein, thus completing the reaction cycle. Several rounds of ATP-dependent interactions between DnaJ, DnaK and GrpE are required for fully efficient folding. Also involved, together with DnaK and GrpE, in the DNA replication of plasmids through activation of initiation proteins. In Francisella tularensis subsp. tularensis (strain FSC 198), this protein is Chaperone protein DnaJ.